The primary structure comprises 433 residues: Tol-Pal system protein TolB (433 aa).

Residues 1–26 (MSLMTKLGFRALVASCLIAAGGAAHA) form the signal peptide.

Belongs to the TolB family. In terms of assembly, the Tol-Pal system is composed of five core proteins: the inner membrane proteins TolA, TolQ and TolR, the periplasmic protein TolB and the outer membrane protein Pal. They form a network linking the inner and outer membranes and the peptidoglycan layer.

The protein localises to the periplasm. Functionally, part of the Tol-Pal system, which plays a role in outer membrane invagination during cell division and is important for maintaining outer membrane integrity. In Burkholderia thailandensis (strain ATCC 700388 / DSM 13276 / CCUG 48851 / CIP 106301 / E264), this protein is Tol-Pal system protein TolB.